A 695-amino-acid polypeptide reads, in one-letter code: Nucleoprotein (695 aa).

Coiled-coil stretches lie at residues 316–341 (VNVG…RRHE) and 372–399 (QTLA…VEDQ). Residues 424–611 (QARPMNRPTA…SPSAPQEDTR (188 aa)) form a disordered region. Basic and acidic residues predominate over residues 438 to 447 (VDDKIEHEST). 2 stretches are compositionally biased toward polar residues: residues 495–505 (RQSQDLNNSQG) and 537–552 (TTDS…SDNE). A PTAP/PSAP motif motif is present at residues 603-606 (PSAP).

This sequence belongs to the filoviruses nucleoprotein family. In terms of assembly, homooligomer. Homomultimerizes to form the nucleocapsid. Binds to viral genomic RNA. Interacts with VP35 and VP30 to form the nucleocapsid. Also interacts with VP24 and VP40. Phosphorylated.

It localises to the virion. The protein resides in the host cytoplasm. Functionally, encapsidates the genome, protecting it from nucleases. The encapsidated genomic RNA is termed the nucleocapsid and serves as template for transcription and replication. During replication, encapsidation by NP is coupled to RNA synthesis and all replicative products are resistant to nucleases. This chain is Nucleoprotein (NP), found in Chlorocebus aethiops (Green monkey).